The primary structure comprises 385 residues: DNA replication and repair protein RecF (385 aa).

30–37 (GPNGYGKT) lines the ATP pocket.

It belongs to the RecF family.

The protein localises to the cytoplasm. In terms of biological role, the RecF protein is involved in DNA metabolism; it is required for DNA replication and normal SOS inducibility. RecF binds preferentially to single-stranded, linear DNA. It also seems to bind ATP. In Mycobacterium bovis (strain ATCC BAA-935 / AF2122/97), this protein is DNA replication and repair protein RecF.